The following is a 534-amino-acid chain: Protein FAM83D (534 aa).

Disordered regions lie at residues 320-372 and 501-534; these read TPPS…STLG and GLNRGRKAQQEARQPNTNIDSGIMGTWPKSRGLQ. Residues 329–342 are compositionally biased toward polar residues; sequence TKPQAERLTSTPAR. Residues 350–362 are compositionally biased toward basic and acidic residues; the sequence is RMNKDIEEPDRKS. The span at 511 to 520 shows a compositional bias: polar residues; that stretch reads EARQPNTNID.

This sequence belongs to the FAM83 family.

The protein localises to the cytoplasm. It is found in the cytoskeleton. The protein resides in the spindle. Its subcellular location is the spindle pole. Functionally, may regulate cell proliferation, growth, migration and epithelial to mesenchymal transition. May also be important for proper chromosome congression and alignment during mitosis. The protein is Protein FAM83D of Danio rerio (Zebrafish).